The primary structure comprises 211 residues: MSKFQVVEHPLIQHKLSILRRKEASTKEFRELVDEIGMLMAYEVSRDLPLEDVEIETPVQKTTVKQIAGKKLAIVPILRAGIGMVDGILKLIPAARVGHIGMYRDEETLKPVEYLVKLPADIADRQIFLVDPMLATGGSAILAVDSLKKRNAKAENIKFVCLVAAPEGVKALQEAHPDIEIYTAALDEKLNEHGYIVPGLGDAGDRLFGTK.

5-phospho-alpha-D-ribose 1-diphosphate is bound by residues arginine 79, arginine 104, and 131-139 (DPMLATGGS). Residues isoleucine 196 and 201-203 (GDA) contribute to the uracil site. Aspartate 202 contributes to the 5-phospho-alpha-D-ribose 1-diphosphate binding site.

Belongs to the UPRTase family. Mg(2+) serves as cofactor.

The enzyme catalyses UMP + diphosphate = 5-phospho-alpha-D-ribose 1-diphosphate + uracil. The protein operates within pyrimidine metabolism; UMP biosynthesis via salvage pathway; UMP from uracil: step 1/1. Allosterically activated by GTP. Functionally, catalyzes the conversion of uracil and 5-phospho-alpha-D-ribose 1-diphosphate (PRPP) to UMP and diphosphate. The chain is Uracil phosphoribosyltransferase from Lactococcus lactis subsp. cremoris (strain MG1363).